The sequence spans 273 residues: Putative pyruvate, phosphate dikinase regulatory protein 2 (273 aa).

151–158 (GVSRTSKT) contributes to the ADP binding site.

Belongs to the pyruvate, phosphate/water dikinase regulatory protein family. PDRP subfamily.

The catalysed reaction is N(tele)-phospho-L-histidyl/L-threonyl-[pyruvate, phosphate dikinase] + ADP = N(tele)-phospho-L-histidyl/O-phospho-L-threonyl-[pyruvate, phosphate dikinase] + AMP + H(+). It carries out the reaction N(tele)-phospho-L-histidyl/O-phospho-L-threonyl-[pyruvate, phosphate dikinase] + phosphate + H(+) = N(tele)-phospho-L-histidyl/L-threonyl-[pyruvate, phosphate dikinase] + diphosphate. Functionally, bifunctional serine/threonine kinase and phosphorylase involved in the regulation of the pyruvate, phosphate dikinase (PPDK) by catalyzing its phosphorylation/dephosphorylation. The chain is Putative pyruvate, phosphate dikinase regulatory protein 2 from Syntrophomonas wolfei subsp. wolfei (strain DSM 2245B / Goettingen).